The sequence spans 391 residues: uncharacterized protein (391 aa).

The segment covering 118-149 (SINSLPPTTTTTTTTTTTTTIPNNNNNITLSP) has biased composition (low complexity). Disordered regions lie at residues 118-162 (SINS…HQHP), 184-258 (QTNV…TPRN), 272-327 (NNNL…NNLN), and 337-356 (LNLNNNNNNNNNNNNNNNNN). The segment covering 150–162 (QHHHGQQQHHQHP) has biased composition (basic residues). A compositionally biased stretch (low complexity) spans 186-211 (NVNNNNNNNNNNNNNNNSNNNNNNNN). A compositionally biased stretch (polar residues) spans 212-223 (DFSTPNSFSVPT). Over residues 244-256 (NTPNNSTSNPTTP) the composition is skewed to low complexity.

This is an uncharacterized protein from Dictyostelium discoideum (Social amoeba).